Reading from the N-terminus, the 115-residue chain is Large ribosomal subunit protein bL20 (115 aa).

It belongs to the bacterial ribosomal protein bL20 family.

In terms of biological role, binds directly to 23S ribosomal RNA and is necessary for the in vitro assembly process of the 50S ribosomal subunit. It is not involved in the protein synthesizing functions of that subunit. The polypeptide is Large ribosomal subunit protein bL20 (Chlorobium phaeobacteroides (strain BS1)).